Reading from the N-terminus, the 965-residue chain is FKBP12-associated protein 1 (965 aa).

The RING-type; degenerate zinc finger occupies Cys68–Tyr118. 5 NF-X1-type zinc fingers span residues Cys159–Arg177, Cys216–Glu235, Cys362–Gln382, Cys468–Glu487, and Cys586–Gln606. The 64-residue stretch at Glu733 to Asp796 folds into the R3H domain. Thr951 is modified (phosphothreonine). Position 958 is a phosphoserine (Ser958).

This sequence belongs to the NFX1 family. As to quaternary structure, interacts with FPR1.

It localises to the cytoplasm. The protein resides in the nucleus. In terms of biological role, may play a role in transcription regulation. The chain is FKBP12-associated protein 1 (FAP1) from Saccharomyces cerevisiae (strain ATCC 204508 / S288c) (Baker's yeast).